Consider the following 132-residue polypeptide: Methylglyoxal synthase (132 aa).

Residues 1-132 (MNIALIAHDQ…LLEWREIEDK (132 aa)) enclose the MGS-like domain. 2 residues coordinate substrate: His8 and Lys12. Asp60 functions as the Proton donor/acceptor in the catalytic mechanism. Substrate is bound at residue His87.

It belongs to the methylglyoxal synthase family.

The enzyme catalyses dihydroxyacetone phosphate = methylglyoxal + phosphate. Catalyzes the formation of methylglyoxal from dihydroxyacetone phosphate. This is Methylglyoxal synthase from Thermoanaerobacter pseudethanolicus (strain ATCC 33223 / 39E) (Clostridium thermohydrosulfuricum).